Consider the following 250-residue polypeptide: MSIKFSFKDEVFSLDKLQLPSRHYHFNDNENYIKLLNIGEGIFPKDKIRTSLSLDNSNLIFTTESATKIYPSKKEYGIQKIDIVLKNNSNLEFINDELILYKDSRYIQFFNLKSDENSTFFYTDILSRGRSFENFDFSNMLIKNSFFCEKSMEYMEKFDVKGAELKDYINRKSSSNFIFAKIYIKTNNNEEFLNRIYLEKFESFTYTKNKKIILGVISSNNMFELKNQIFKIWELYRKELNKSKFNLGKQ.

It belongs to the UreD family. UreD, UreF and UreG form a complex that acts as a GTP-hydrolysis-dependent molecular chaperone, activating the urease apoprotein by helping to assemble the nickel containing metallocenter of UreC. The UreE protein probably delivers the nickel.

It localises to the cytoplasm. Required for maturation of urease via the functional incorporation of the urease nickel metallocenter. This is Urease accessory protein UreD from Aliarcobacter butzleri (strain RM4018) (Arcobacter butzleri).